We begin with the raw amino-acid sequence, 334 residues long: MITKNLPLTDLHRHLDGNIRTKTILELGQKFGIALPAYDIESLTPHVQIVEAEPSLVAFLSKLDWGVAVLGDLDACRRVAYENVEDALNAQIDYAELRFSPYYMAMKHKLPVAGVVEAVVDGVQAGMRDFGIKANLIGIMSRTFGTDACQQELDAILSQKDHIVAVDLAGDELGQPGERFVSHFKQVRDAGLNVTVHAGEAAGAESMWQAIQELGATRIGHGVKAIHDPKLMDYLAENRIGIESCLTSNFQTSTVDSLANHPLKQFLDHGVLACLNTDDPAVEGIELPYEYEVAAPAAGLSQEQIRQAQINGLELAFISDAEKAELKEKVKDRV.

The Zn(2+) site is built by histidine 12 and histidine 14. Residues histidine 14, aspartate 16, and glycine 170 each contribute to the substrate site. Histidine 197 lines the Zn(2+) pocket. The active-site Proton donor is glutamate 200. Aspartate 278 contacts Zn(2+). Aspartate 279 serves as a coordination point for substrate.

This sequence belongs to the metallo-dependent hydrolases superfamily. Adenosine and AMP deaminases family. Adenosine deaminase subfamily. The cofactor is Zn(2+).

The enzyme catalyses adenosine + H2O + H(+) = inosine + NH4(+). It catalyses the reaction 2'-deoxyadenosine + H2O + H(+) = 2'-deoxyinosine + NH4(+). Functionally, catalyzes the hydrolytic deamination of adenosine and 2-deoxyadenosine. This chain is Adenosine deaminase, found in Vibrio parahaemolyticus serotype O3:K6 (strain RIMD 2210633).